The following is a 410-amino-acid chain: Peptidase T (410 aa).

His-79 provides a ligand contact to Zn(2+). Residue Asp-81 is part of the active site. Residue Asp-142 coordinates Zn(2+). Glu-176 functions as the Proton acceptor in the catalytic mechanism. Positions 177, 199, and 381 each coordinate Zn(2+).

Belongs to the peptidase M20B family. It depends on Zn(2+) as a cofactor.

It localises to the cytoplasm. The catalysed reaction is Release of the N-terminal residue from a tripeptide.. Functionally, cleaves the N-terminal amino acid of tripeptides. In Bacillus mycoides (strain KBAB4) (Bacillus weihenstephanensis), this protein is Peptidase T.